We begin with the raw amino-acid sequence, 324 residues long: tRNA-modifying protein YgfZ (324 aa).

Residue Trp-184 coordinates folate.

Belongs to the tRNA-modifying YgfZ family.

Its subcellular location is the cytoplasm. Its function is as follows. Folate-binding protein involved in regulating the level of ATP-DnaA and in the modification of some tRNAs. It is probably a key factor in regulatory networks that act via tRNA modification, such as initiation of chromosomal replication. The sequence is that of tRNA-modifying protein YgfZ from Vibrio vulnificus (strain YJ016).